Here is a 298-residue protein sequence, read N- to C-terminus: Probable tRNA(His) guanylyltransferase (298 aa).

Residues aspartate 58, glycine 59, and aspartate 105 each coordinate Mg(2+). Residues 58 to 63 (DGRNFH) and 104 to 105 (SD) each bind GTP.

The protein belongs to the tRNA(His) guanylyltransferase family. In terms of assembly, homotetramer. Interacts with MFN1 and MFN2; functions as a guanyl-nucleotide exchange factor/GEF for MFN2 and also probably MFN1. Mg(2+) is required as a cofactor.

Its subcellular location is the cytoplasm. The protein resides in the mitochondrion. The catalysed reaction is a 5'-end ribonucleotide-tRNA(His) + GTP + ATP + H2O = a 5'-end phospho-guanosine-ribonucleotide-tRNA(His) + AMP + 2 diphosphate + H(+). Adds a GMP to the 5'-end of tRNA(His) after transcription and RNase P cleavage. This step is essential for proper recognition of the tRNA and for the fidelity of protein synthesis. Also functions as a guanyl-nucleotide exchange factor/GEF for the MFN1 and MFN2 mitofusins thereby regulating mitochondrial fusion. By regulating both mitochondrial dynamics and bioenergetic function, it contributes to cell survival following oxidative stress. The polypeptide is Probable tRNA(His) guanylyltransferase (THG1L) (Bos taurus (Bovine)).